Reading from the N-terminus, the 652-residue chain is DNA polymerase epsilon subunit B (652 aa).

The protein belongs to the DNA polymerase epsilon subunit B family. In terms of assembly, heterotetramer. Consists of four subunits: POL2, DPB2, DPB3 and DPB4.

Its subcellular location is the nucleus. In terms of biological role, as accessory component of the DNA polymerase epsilon (DNA polymerase II) participates in chromosomal DNA replication. The protein is DNA polymerase epsilon subunit B (DPB2) of Yarrowia lipolytica (strain CLIB 122 / E 150) (Yeast).